A 94-amino-acid chain; its full sequence is Small ribosomal subunit protein bS6 (94 aa).

It belongs to the bacterial ribosomal protein bS6 family.

Binds together with bS18 to 16S ribosomal RNA. This chain is Small ribosomal subunit protein bS6, found in Akkermansia muciniphila (strain ATCC BAA-835 / DSM 22959 / JCM 33894 / BCRC 81048 / CCUG 64013 / CIP 107961 / Muc).